A 713-amino-acid polypeptide reads, in one-letter code: Polyphosphate kinase (713 aa).

An ATP-binding site is contributed by N63. Residues R394 and R424 each contribute to the Mg(2+) site. H454 acts as the Phosphohistidine intermediate in catalysis. Residues Y487, R583, and H611 each coordinate ATP.

It belongs to the polyphosphate kinase 1 (PPK1) family. Requires Mg(2+) as cofactor. An intermediate of this reaction is the autophosphorylated ppk in which a phosphate is covalently linked to a histidine residue through a N-P bond.

It catalyses the reaction [phosphate](n) + ATP = [phosphate](n+1) + ADP. Its function is as follows. Catalyzes the reversible transfer of the terminal phosphate of ATP to form a long-chain polyphosphate (polyP). This Prosthecochloris aestuarii (strain DSM 271 / SK 413) protein is Polyphosphate kinase.